Here is a 315-residue protein sequence, read N- to C-terminus: Methionyl-tRNA formyltransferase (315 aa).

Residue 112–115 (SLLP) participates in (6S)-5,6,7,8-tetrahydrofolate binding.

It belongs to the Fmt family.

The catalysed reaction is L-methionyl-tRNA(fMet) + (6R)-10-formyltetrahydrofolate = N-formyl-L-methionyl-tRNA(fMet) + (6S)-5,6,7,8-tetrahydrofolate + H(+). In terms of biological role, attaches a formyl group to the free amino group of methionyl-tRNA(fMet). The formyl group appears to play a dual role in the initiator identity of N-formylmethionyl-tRNA by promoting its recognition by IF2 and preventing the misappropriation of this tRNA by the elongation apparatus. The sequence is that of Methionyl-tRNA formyltransferase from Leptospira interrogans serogroup Icterohaemorrhagiae serovar copenhageni (strain Fiocruz L1-130).